A 513-amino-acid polypeptide reads, in one-letter code: Pleiotropic regulator 1 (513 aa).

Position 1 is an N-acetylmethionine (Met-1). Residues 60-79 are disordered; it reads TSKENLKEKGPQNATDSYPH. The residue at position 119 (Ser-119) is a Phosphoserine. Residues 136–160 form a disordered region; sequence VDANRTGPAGSEYRHPGASDRSQPT. Ser-200 carries the phosphoserine modification. WD repeat units follow at residues 201 to 240, 243 to 282, 285 to 324, 327 to 366, 369 to 409, 410 to 448, and 459 to 498; these read GHLG…LKLS, GHIS…VIRH, GHLS…SVHT, GHTN…TRVT, NHKK…QNLS, GHNA…NFQR, and DSES…TEET. Ser-390 is subject to Phosphoserine.

Belongs to the WD repeat PRL1/PRL2 family. In terms of assembly, identified in the spliceosome C complex. Component of the PRP19-CDC5L splicing complex composed of a core complex comprising a homotetramer of PRPF19, CDC5L, PLRG1 and BCAS2, and at least three less stably associated proteins CTNNBL1, CWC15 and HSPA8. Interacts (via its WD40 repeat domain) directly with CDC5L (via its C-terminal); the interaction is required for mRNA splicing but not for spliceosome assembly. Component of the minor spliceosome, which splices U12-type introns. Within this complex, interacts with CRIPT. Also interacts directly in the complex with BCAS2 and PRPF19. Interacts with USB1.

It is found in the nucleus. The protein localises to the nucleus speckle. Its function is as follows. Involved in pre-mRNA splicing as component of the spliceosome. Component of the PRP19-CDC5L complex that forms an integral part of the spliceosome and is required for activating pre-mRNA splicing. As a component of the minor spliceosome, involved in the splicing of U12-type introns in pre-mRNAs. The chain is Pleiotropic regulator 1 (Plrg1) from Mus musculus (Mouse).